The chain runs to 107 residues: Alpha-elapitoxin-Al2a (107 aa).

A signal peptide spans 1–21 (MKTLLLTLVVVTIVCLDLGDS). Cystine bridges form between Cys24–Cys41, Cys34–Cys62, Cys47–Cys51, Cys66–Cys77, and Cys78–Cys83.

Belongs to the three-finger toxin family. Long-chain subfamily. Type II alpha-neurotoxin sub-subfamily. Expressed by the venom gland.

It is found in the secreted. Functionally, binds with high affinity to muscular (alpha-1/CHRNA1) and neuronal (alpha-7/CHRNA7) nicotinic acetylcholine receptor (nAChR) and inhibits acetylcholine from binding to the receptor, thereby impairing neuromuscular and neuronal transmission. The chain is Alpha-elapitoxin-Al2a from Austrelaps labialis (Pygmy copperhead).